The following is a 68-amino-acid chain: Beta-defensin 1 (68 aa).

The first 21 residues, 1–21 (MRTSYLLLFTLCLLLSEMASG), serve as a signal peptide directing secretion. Positions 22 to 32 (DNFLTGLGHRS) are excised as a propeptide. Disulfide bonds link Cys-37/Cys-66, Cys-44/Cys-59, and Cys-49/Cys-67.

The protein belongs to the beta-defensin family. Monomer. Homodimer.

It localises to the secreted. It is found in the membrane. Functionally, has bactericidal activity. May act as a ligand for C-C chemokine receptor CCR6. Positively regulates the sperm motility and bactericidal activity in a CCR6-dependent manner. Binds to CCR6 and triggers Ca2+ mobilization in the sperm which is important for its motility. The sequence is that of Beta-defensin 1 (DEFB1) from Hylobates moloch (Silvery gibbon).